Here is a 22-residue protein sequence, read N- to C-terminus: Bacteriocin serracin-P 23 kDa subunit (22 aa).

Functionally, major component of a prophage tail tube. Its function is as follows. Antibacterial activity against Gram-negative bacterium E.amylovora. The protein is Bacteriocin serracin-P 23 kDa subunit of Serratia plymuthica.